The primary structure comprises 471 residues: tRNA(Ile)-lysidine synthase (471 aa).

35 to 40 (SGGADS) lines the ATP pocket.

This sequence belongs to the tRNA(Ile)-lysidine synthase family.

It is found in the cytoplasm. The enzyme catalyses cytidine(34) in tRNA(Ile2) + L-lysine + ATP = lysidine(34) in tRNA(Ile2) + AMP + diphosphate + H(+). Ligates lysine onto the cytidine present at position 34 of the AUA codon-specific tRNA(Ile) that contains the anticodon CAU, in an ATP-dependent manner. Cytidine is converted to lysidine, thus changing the amino acid specificity of the tRNA from methionine to isoleucine. This is tRNA(Ile)-lysidine synthase from Geobacter sulfurreducens (strain ATCC 51573 / DSM 12127 / PCA).